The chain runs to 178 residues: Acireductone dioxygenase (178 aa).

Fe(2+)-binding residues include H100, H102, E106, and H145. H100, H102, E106, and H145 together coordinate Ni(2+).

The protein belongs to the acireductone dioxygenase (ARD) family. Monomer. Requires Fe(2+) as cofactor. The cofactor is Ni(2+).

It catalyses the reaction 1,2-dihydroxy-5-(methylsulfanyl)pent-1-en-3-one + O2 = 3-(methylsulfanyl)propanoate + CO + formate + 2 H(+). The enzyme catalyses 1,2-dihydroxy-5-(methylsulfanyl)pent-1-en-3-one + O2 = 4-methylsulfanyl-2-oxobutanoate + formate + 2 H(+). It functions in the pathway amino-acid biosynthesis; L-methionine biosynthesis via salvage pathway; L-methionine from S-methyl-5-thio-alpha-D-ribose 1-phosphate: step 5/6. Catalyzes 2 different reactions between oxygen and the acireductone 1,2-dihydroxy-3-keto-5-methylthiopentene (DHK-MTPene) depending upon the metal bound in the active site. Fe-containing acireductone dioxygenase (Fe-ARD) produces formate and 2-keto-4-methylthiobutyrate (KMTB), the alpha-ketoacid precursor of methionine in the methionine recycle pathway. Ni-containing acireductone dioxygenase (Ni-ARD) produces methylthiopropionate, carbon monoxide and formate, and does not lie on the methionine recycle pathway. In Bacillus subtilis (strain 168), this protein is Acireductone dioxygenase (mtnD).